A 356-amino-acid polypeptide reads, in one-letter code: tRNA-specific 2-thiouridylase MnmA 2 (356 aa).

ATP is bound by residues 8–15 (GMSGGVDS) and Met34. The active-site Nucleophile is the Cys103. Cys103 and Cys199 are joined by a disulfide. Gly127 is a binding site for ATP. Residues 149–151 (KDQ) form an interaction with tRNA region. Catalysis depends on Cys199, which acts as the Cysteine persulfide intermediate. The tract at residues 305–306 (RY) is interaction with tRNA.

This sequence belongs to the MnmA/TRMU family.

The protein resides in the cytoplasm. The catalysed reaction is S-sulfanyl-L-cysteinyl-[protein] + uridine(34) in tRNA + AH2 + ATP = 2-thiouridine(34) in tRNA + L-cysteinyl-[protein] + A + AMP + diphosphate + H(+). Its function is as follows. Catalyzes the 2-thiolation of uridine at the wobble position (U34) of tRNA, leading to the formation of s(2)U34. The chain is tRNA-specific 2-thiouridylase MnmA 2 from Clostridium botulinum (strain Okra / Type B1).